The following is a 955-amino-acid chain: Glycine dehydrogenase (decarboxylating) (955 aa).

Lys-705 carries the post-translational modification N6-(pyridoxal phosphate)lysine.

This sequence belongs to the GcvP family. As to quaternary structure, the glycine cleavage system is composed of four proteins: P, T, L and H. The cofactor is pyridoxal 5'-phosphate.

It carries out the reaction N(6)-[(R)-lipoyl]-L-lysyl-[glycine-cleavage complex H protein] + glycine + H(+) = N(6)-[(R)-S(8)-aminomethyldihydrolipoyl]-L-lysyl-[glycine-cleavage complex H protein] + CO2. Functionally, the glycine cleavage system catalyzes the degradation of glycine. The P protein binds the alpha-amino group of glycine through its pyridoxal phosphate cofactor; CO(2) is released and the remaining methylamine moiety is then transferred to the lipoamide cofactor of the H protein. This Aliivibrio fischeri (strain MJ11) (Vibrio fischeri) protein is Glycine dehydrogenase (decarboxylating).